The primary structure comprises 271 residues: Murein DD-endopeptidase MepH (271 aa).

The N-terminal stretch at 1–27 is a signal peptide; it reads MARINRISITLCALLFTTLPLTPMAHA. A disordered region spans residues 27–102; the sequence is ASKQARESSA…KHAVNKTASA (76 aa). Residues 55–64 show a composition bias toward basic residues; sequence KTQKTAKKAA. A compositionally biased stretch (low complexity) spans 65–86; sequence SKSTTKSKTASSVKKSSITASK. In terms of domain architecture, NlpC/P60 spans 138-265; that stretch reads QKATKVAMNK…RHYVGARRVM (128 aa). Cys169 serves as the catalytic Nucleophile. The active-site Proton acceptor is His224. Gln236 is an active-site residue.

This sequence belongs to the peptidase C40 family.

The protein operates within cell wall biogenesis; cell wall polysaccharide biosynthesis. In terms of biological role, a murein DD-endopeptidase with specificity for D-Ala-meso-diaminopimelic acid (mDAP) cross-links. Its role is probably to cleave D-Ala-mDAP cross-links to allow insertion of new glycans and thus cell wall expansion. Functionally redundant with MepM and MepH. Partially suppresses an mepS disruption mutant. The sequence is that of Murein DD-endopeptidase MepH (mepH) from Escherichia coli (strain K12).